A 71-amino-acid polypeptide reads, in one-letter code: UPF0435 protein SERP1418 (71 aa).

This sequence belongs to the UPF0435 family.

In Staphylococcus epidermidis (strain ATCC 35984 / DSM 28319 / BCRC 17069 / CCUG 31568 / BM 3577 / RP62A), this protein is UPF0435 protein SERP1418.